Reading from the N-terminus, the 108-residue chain is Guanine nucleotide-binding protein subunit gamma (108 aa).

Cysteine 104 carries S-palmitoyl cysteine lipidation. The residue at position 105 (cysteine 105) is a Cysteine methyl ester. The S-farnesyl cysteine moiety is linked to residue cysteine 105. Residues 106–108 (VIS) constitute a propeptide, removed in mature form.

It belongs to the G protein gamma family. G proteins are composed of 3 units, alpha, beta and gamma.

The protein resides in the membrane. The sequence is that of Guanine nucleotide-binding protein subunit gamma from Yarrowia lipolytica (strain CLIB 122 / E 150) (Yeast).